Reading from the N-terminus, the 393-residue chain is DNA/RNA-binding protein KIN17 (393 aa).

A C2H2-type zinc finger spans residues 28–50; sequence CQMCQKQCRDENGFKCHCMSESH. The tract at residues 51–160 is winged helix-turn-helix (wHTH); that stretch reads QRQLLLASEN…RQLELEKKKK (110 aa). The residue at position 135 (Lys135) is an N6,N6,N6-trimethyllysine; by METTL22; in vitro. Lys135 is modified (N6-methyllysine). A coiled-coil region spans residues 147–180; that stretch reads ETIRRQLELEKKKKQDLDDEEKTAKFIEEQVRRG. Low complexity predominate over residues 209 to 224; it reads KGACSSSGATSSKSST. The disordered stretch occupies residues 209 to 260; it reads KGACSSSGATSSKSSTLGPSALKTIGSSASVKRKESSQSSTQSKEKKKKKSA. Positions 250–277 form a coiled coil; that stretch reads QSKEKKKKKSALDEIMEIEEEKKRTART. The tract at residues 284 to 334 is C-terminal subdomain A; the sequence is EIIVKIITKKLGEKYHKKKAIVKEVIDKYTAVVKMIDSGDKLKLDQTHLET. The segment at 340-391 is C-terminal subdomain B; that stretch reads GKRILVLNGGYRGNEGTLESINEKTFSATIVIETGPLKGRRVEGIQYEDISK.

Belongs to the KIN17 family. In terms of assembly, associated with DNA polymerase alpha, RFC1 and cyclin A, in multiprotein DNA replication complexes. Also associates with replication origins at the G1/S phase boundary and throughout the S phase in vivo. As to quaternary structure, (Microbial infection) Interacts with SV40 large T antigen. In terms of tissue distribution, ubiquitously expressed in all tissues examined, with highest levels in skeletal muscle, heart and testis. Differentially expressed in non-tumorigenic and tumorigenic cell lines. Highly expressed in proliferating epithelial keratinocyte cells in vitro (at protein level).

The protein localises to the nucleus. It localises to the cytoplasm. Its function is as follows. Involved in DNA replication and the cellular response to DNA damage. May participate in DNA replication factories and create a bridge between DNA replication and repair mediated by high molecular weight complexes. May play a role in illegitimate recombination and regulation of gene expression. May participate in mRNA processing. Binds, in vitro, to double-stranded DNA. Also shown to bind preferentially to curved DNA in vitro and in vivo. Binds via its C-terminal domain to RNA in vitro. The polypeptide is DNA/RNA-binding protein KIN17 (Homo sapiens (Human)).